The chain runs to 415 residues: Histidine--tRNA ligase (415 aa).

It belongs to the class-II aminoacyl-tRNA synthetase family. Homodimer.

It localises to the cytoplasm. It catalyses the reaction tRNA(His) + L-histidine + ATP = L-histidyl-tRNA(His) + AMP + diphosphate + H(+). In Rickettsia bellii (strain RML369-C), this protein is Histidine--tRNA ligase.